We begin with the raw amino-acid sequence, 157 residues long: Phosphopantetheine adenylyltransferase (157 aa).

Residue T8 participates in substrate binding. Residues 8-9 (TF) and H16 contribute to the ATP site. Substrate is bound by residues K40, T72, and R86. ATP contacts are provided by residues 87-89 (GLR), E97, and 122-128 (YSFLSSS).

This sequence belongs to the bacterial CoaD family. In terms of assembly, homohexamer. Mg(2+) is required as a cofactor.

It is found in the cytoplasm. The enzyme catalyses (R)-4'-phosphopantetheine + ATP + H(+) = 3'-dephospho-CoA + diphosphate. It participates in cofactor biosynthesis; coenzyme A biosynthesis; CoA from (R)-pantothenate: step 4/5. Functionally, reversibly transfers an adenylyl group from ATP to 4'-phosphopantetheine, yielding dephospho-CoA (dPCoA) and pyrophosphate. The chain is Phosphopantetheine adenylyltransferase from Prochlorococcus marinus (strain MIT 9312).